A 383-amino-acid polypeptide reads, in one-letter code: Glutamate 5-kinase (383 aa).

K17 lines the ATP pocket. Substrate-binding residues include S64, D151, and N165. 185-186 (SD) contacts ATP. The PUA domain maps to 291–367 (SGTIRVDAGA…DEIEGILGYN (77 aa)).

This sequence belongs to the glutamate 5-kinase family.

Its subcellular location is the cytoplasm. The catalysed reaction is L-glutamate + ATP = L-glutamyl 5-phosphate + ADP. The protein operates within amino-acid biosynthesis; L-proline biosynthesis; L-glutamate 5-semialdehyde from L-glutamate: step 1/2. In terms of biological role, catalyzes the transfer of a phosphate group to glutamate to form L-glutamate 5-phosphate. This is Glutamate 5-kinase from Methanosarcina barkeri (strain Fusaro / DSM 804).